A 454-amino-acid chain; its full sequence is Peroxisome assembly protein 10 (454 aa).

The Peroxisomal matrix segment spans residues Met1 to Ala23. Residues Ala24–Arg53 form a helical membrane-spanning segment. Gly54 is a topological domain (cytoplasmic). A helical membrane pass occupies residues Ala55–Leu76. The Peroxisomal matrix portion of the chain corresponds to Thr77–Ser132. Residues Leu133–Leu165 form a helical membrane-spanning segment. Topologically, residues Gln166 to Val201 are cytoplasmic. The interval Thr171–Gly194 is disordered. Residues Ser183–Gly194 are compositionally biased toward gly residues. Residues Leu202 to Thr229 traverse the membrane as a helical segment. The Peroxisomal matrix portion of the chain corresponds to Gly230–Gly276. Residues Tyr277–Val296 traverse the membrane as a helical segment. The Cytoplasmic segment spans residues Arg297–Ala454. Residues Ser302–Gly329 are disordered. Zn(2+) contacts are provided by Cys402, Cys405, Cys417, His419, Cys422, Cys425, Cys436, and Cys439. Residues Cys402–Arg440 form an RING-type zinc finger.

The protein belongs to the pex2/pex10/pex12 family. As to quaternary structure, component of the PEX2-PEX10-PEX12 retrotranslocation channel, composed of PEX2, PEX10 and PEX12.

It is found in the peroxisome membrane. It catalyses the reaction S-ubiquitinyl-[E2 ubiquitin-conjugating enzyme]-L-cysteine + [acceptor protein]-L-lysine = [E2 ubiquitin-conjugating enzyme]-L-cysteine + N(6)-ubiquitinyl-[acceptor protein]-L-lysine.. The protein operates within protein modification; protein ubiquitination. With respect to regulation, the E3 ubiquitin-protein ligase activity is stimulated by PEX12. In terms of biological role, E3 ubiquitin-protein ligase component of a retrotranslocation channel required for peroxisome organization by mediating export of the PEX5 receptor from peroxisomes to the cytosol, thereby promoting PEX5 recycling. The retrotranslocation channel is composed of PEX2, PEX10 and PEX12; each subunit contributing transmembrane segments that coassemble into an open channel that specifically allows the passage of PEX5 through the peroxisomal membrane. PEX10 also regulates PEX5 recycling by acting as a E3 ubiquitin-protein ligase. When PEX5 recycling is compromised, PEX10 catalyzes polyubiquitination of PEX5 during its passage through the retrotranslocation channel, leading to its degradation. This is Peroxisome assembly protein 10 from Thermothelomyces thermophilus (strain ATCC 42464 / BCRC 31852 / DSM 1799) (Sporotrichum thermophile).